Here is a 191-residue protein sequence, read N- to C-terminus: Putative NADH dehydrogenase/NAD(P)H nitroreductase (191 aa).

127–132 is an NAD(+) binding site; the sequence is AAHSLG.

The protein belongs to the nitroreductase family. Requires FMN as cofactor.

In Methanothermobacter thermautotrophicus (strain ATCC 29096 / DSM 1053 / JCM 10044 / NBRC 100330 / Delta H) (Methanobacterium thermoautotrophicum), this protein is Putative NADH dehydrogenase/NAD(P)H nitroreductase.